Here is a 296-residue protein sequence, read N- to C-terminus: Light-independent protochlorophyllide reductase iron-sulfur ATP-binding protein (296 aa).

ATP-binding positions include 10–15 (GIGKST) and Lys39. Mg(2+) is bound at residue Ser14. The [4Fe-4S] cluster site is built by Cys95 and Cys129. 180-181 (NR) contacts ATP.

The protein belongs to the NifH/BchL/ChlL family. As to quaternary structure, homodimer. Protochlorophyllide reductase is composed of three subunits; ChlL, ChlN and ChlB. [4Fe-4S] cluster serves as cofactor.

It localises to the plastid. The protein resides in the chloroplast. It carries out the reaction chlorophyllide a + oxidized 2[4Fe-4S]-[ferredoxin] + 2 ADP + 2 phosphate = protochlorophyllide a + reduced 2[4Fe-4S]-[ferredoxin] + 2 ATP + 2 H2O. Its pathway is porphyrin-containing compound metabolism; chlorophyll biosynthesis (light-independent). Its function is as follows. Component of the dark-operative protochlorophyllide reductase (DPOR) that uses Mg-ATP and reduced ferredoxin to reduce ring D of protochlorophyllide (Pchlide) to form chlorophyllide a (Chlide). This reaction is light-independent. The L component serves as a unique electron donor to the NB-component of the complex, and binds Mg-ATP. This chain is Light-independent protochlorophyllide reductase iron-sulfur ATP-binding protein, found in Chlorokybus atmophyticus (Soil alga).